We begin with the raw amino-acid sequence, 208 residues long: EF-hand protein 5 variant 1 (208 aa).

The segment at 1–34 is disordered; sequence MQARGTVKVQGDAKVDGKMSTGQHSHHQHLNSTQ. EF-hand domains are found at residues 64–98, 99–134, 135–170, and 171–206; these read MAEG…HLTE, EEFH…EVDD, TMAD…LGER, and STPE…SRVN. 5 residues coordinate Ca(2+): Glu-118, Asp-123, Asp-148, Thr-152, and Tyr-154.

The polypeptide is EF-hand protein 5 variant 1 (Trypanosoma cruzi).